A 561-amino-acid chain; its full sequence is MVILEFLQTLLRNNPEIALFLAIAIGYWIGKFRFGSLQIGGVAGSLLAAVLISQIGIHIDSGLKTVLFALFIYAVGFQSGPQFFKSLGRQSLREVLMAFVLAISGLFTVLAVARMFHLDKGLAAGVAAGGLTQSAIIGTASSALEKLGLPLAQTQMLQGHVAVGYAVTYIFGSLAPIIICVNILPWLMKRGLREDALTAEAEQMQGMAVYGDGERPALSEFVSRVYQVKKAGQSVQQIESDHVTVEQIRRQKNLVAVTQDSTVEAGDLLLLFGHRADVISTGELLGEEIKQPPHDMDVVIVRHDVLLTNKAFVGKSVAECSQILSQVARHGVYFLGLKRGDKTLPLTSDLHILSGDIVTLYGTRQDVDRVAKELGSLLTRSLKTDLVFHGVGLVVGLLIGLIVVRLGSIPLTLGSGGGALLSGLLFGWYQNRHSKSGNMPMAASTLLVDFGLSGFVAVTGLQTGQQAVTTIMQQGITLFMLGVVVSIVPLIITMLFGRYVLQYKNTAVFAGALAGSRSANPALGEILNKAGNAVPTTSFAITYAIANVLLTLLGPLVVAFS.

A run of 6 helical transmembrane segments spans residues 10 to 29, 34 to 56, 63 to 80, 95 to 117, 122 to 144, and 164 to 186; these read LLRN…GYWI, FGSL…SQIG, LKTV…FQSG, VLMA…RMFH, LAAG…SSAL, and GYAV…ILPW. 2 RCK C-terminal domains span residues 205–287 and 294–376; these read QGMA…LLGE and HDMD…ELGS. 5 helical membrane passes run 386 to 403, 407 to 429, 442 to 464, 479 to 501, and 538 to 560; these read LVFH…GLIV, GSIP…FGWY, AAST…LQTG, FMLG…RYVL, and SFAI…VVAF.

It belongs to the AAE transporter (TC 2.A.81) family.

Its subcellular location is the cell membrane. This is an uncharacterized protein from Zymomonas mobilis subsp. mobilis (strain ATCC 31821 / ZM4 / CP4).